We begin with the raw amino-acid sequence, 148 residues long: Large ribosomal subunit protein bL27m (148 aa).

A mitochondrion-targeting transit peptide spans 1-30 (MAAAALTLRTRAAVTALLSPTAPTALAVRH). Positions 28–48 (VRHASKKTGGSSKNLGGKSRG) are disordered.

This sequence belongs to the bacterial ribosomal protein bL27 family. As to quaternary structure, component of the mitochondrial ribosome large subunit (39S) which comprises a 16S rRNA and about 50 distinct proteins.

The protein localises to the mitochondrion. The polypeptide is Large ribosomal subunit protein bL27m (Mrpl27) (Mus musculus (Mouse)).